The chain runs to 126 residues: Fluoride-specific ion channel FluC (126 aa).

Transmembrane regions (helical) follow at residues Ile4–Trp24, Tyr35–Ile55, Met68–Phe88, and Ile100–Leu120. Positions 75 and 78 each coordinate Na(+).

This sequence belongs to the fluoride channel Fluc/FEX (TC 1.A.43) family.

The protein resides in the cell membrane. The catalysed reaction is fluoride(in) = fluoride(out). Its activity is regulated as follows. Na(+) is not transported, but it plays an essential structural role and its presence is essential for fluoride channel function. Fluoride-specific ion channel. Important for reducing fluoride concentration in the cell, thus reducing its toxicity. This is Fluoride-specific ion channel FluC from Chloroflexus aurantiacus (strain ATCC 29366 / DSM 635 / J-10-fl).